Consider the following 273-residue polypeptide: SAGA-associated factor 29 homolog B (273 aa).

One can recognise an SGF29 C-terminal domain in the interval 128–273 (EAYASLKGEQ…VVALPEGHRQ (146 aa)). 2 histone H3K4me3 N-terminus binding regions span residues 171–173 (DEE) and 220–223 (GTTA). The segment at 245 to 248 (FDDD) is histone H3K4me3 binding.

This sequence belongs to the SGF29 family. In terms of tissue distribution, expressed in roots, rosette leaves, cauline leaves, stems and flowers.

Its subcellular location is the nucleus. Its function is as follows. Chromatin reader component of the transcription regulatory histone acetylation (HAT) complex SAGA. In Arabidopsis thaliana (Mouse-ear cress), this protein is SAGA-associated factor 29 homolog B.